The sequence spans 131 residues: Small ribosomal subunit protein uS12 (131 aa).

3-methylthioaspartic acid is present on Asp-89.

This sequence belongs to the universal ribosomal protein uS12 family. Part of the 30S ribosomal subunit. Contacts proteins S8 and S17. May interact with IF1 in the 30S initiation complex.

Functionally, with S4 and S5 plays an important role in translational accuracy. Interacts with and stabilizes bases of the 16S rRNA that are involved in tRNA selection in the A site and with the mRNA backbone. Located at the interface of the 30S and 50S subunits, it traverses the body of the 30S subunit contacting proteins on the other side and probably holding the rRNA structure together. The combined cluster of proteins S8, S12 and S17 appears to hold together the shoulder and platform of the 30S subunit. The protein is Small ribosomal subunit protein uS12 of Campylobacter concisus (strain 13826).